Reading from the N-terminus, the 378-residue chain is S-(hydroxymethyl)glutathione dehydrogenase (378 aa).

Zn(2+) is bound by residues Cys-49, His-71, Cys-101, Cys-104, Cys-107, Cys-115, and Cys-178.

This sequence belongs to the zinc-containing alcohol dehydrogenase family. Class-III subfamily. As to quaternary structure, homodimer. The cofactor is Zn(2+).

The protein resides in the cytoplasm. The catalysed reaction is S-(hydroxymethyl)glutathione + NADP(+) = S-formylglutathione + NADPH + H(+). The enzyme catalyses S-(hydroxymethyl)glutathione + NAD(+) = S-formylglutathione + NADH + H(+). It catalyses the reaction a primary alcohol + NAD(+) = an aldehyde + NADH + H(+). It carries out the reaction a secondary alcohol + NAD(+) = a ketone + NADH + H(+). The catalysed reaction is S-nitrosoglutathione + NADH + H(+) = S-(hydroxysulfenamide)glutathione + NAD(+). In terms of biological role, has high formaldehyde dehydrogenase activity in the presence of glutathione and catalyzes the oxidation of normal alcohols in a reaction that is not GSH-dependent. In addition, hemithiolacetals other than those formed from GSH, including omega-thiol fatty acids, also are substrates. Also acts as a S-nitroso-glutathione reductase by catalyzing the NADH-dependent reduction of S-nitrosoglutathione. This Haemophilus influenzae (strain ATCC 51907 / DSM 11121 / KW20 / Rd) protein is S-(hydroxymethyl)glutathione dehydrogenase (frmA).